The sequence spans 94 residues: Co-chaperonin GroES (94 aa).

It belongs to the GroES chaperonin family. As to quaternary structure, heptamer of 7 subunits arranged in a ring. Interacts with the chaperonin GroEL.

The protein resides in the cytoplasm. Its function is as follows. Together with the chaperonin GroEL, plays an essential role in assisting protein folding. The GroEL-GroES system forms a nano-cage that allows encapsulation of the non-native substrate proteins and provides a physical environment optimized to promote and accelerate protein folding. GroES binds to the apical surface of the GroEL ring, thereby capping the opening of the GroEL channel. The protein is Co-chaperonin GroES of Leuconostoc citreum (strain KM20).